The following is a 60-amino-acid chain: MPTVNPQQLADRIDTVLDILVAGDYHSAIHNLEILKAELLAQSQQNDEPGEKKQKAPWEI.

It belongs to the UPF0509 family.

This chain is UPF0509 protein ESA_01586, found in Cronobacter sakazakii (strain ATCC BAA-894) (Enterobacter sakazakii).